The primary structure comprises 2194 residues: Supervillin (2194 aa).

Residues 1 to 174 form an interaction with MYLK region; it reads MKRKERIARR…SSYSRTELSG (174 aa). 8 disordered regions span residues 35-98, 118-335, 388-414, 450-500, 513-563, 589-667, 685-719, and 739-791; these read LEED…TQSL, EKYG…QRRH, PESI…KVLE, EDRG…TERM, AVSQ…QTSK, RASR…KVDE, KSFD…QPVT, and HPVM…DSST. Serine 50 is subject to Phosphoserine. Positions 87–98 are enriched in polar residues; it reads PYSSGIMDTQSL. Composition is skewed to basic and acidic residues over residues 139–161 and 181–192; these read SRKD…ESSR and ESKDYGLHRSDG. 2 positions are modified to phosphoserine: serine 245 and serine 262. Composition is skewed to basic and acidic residues over residues 283-294 and 308-319; these read PKHEWFLQKDSE and KVREKLVREESA. A compositionally biased stretch (polar residues) spans 320–330; that stretch reads RSSPELTSESL. Phosphoserine occurs at positions 321 and 322. Residues 455–467 are compositionally biased toward polar residues; it reads GRSQEAPSGTEDL. The span at 540–551 shows a compositional bias: low complexity; the sequence is PPQLQALKAKAP. Basic and acidic residues-rich tracts occupy residues 592 to 615 and 626 to 635; these read RKPE…ERGS and ENRKTSERFR. Phosphoserine occurs at positions 652 and 686. A compositionally biased stretch (basic and acidic residues) spans 704-714; that stretch reads QRLRRLQDRSH. Residues serine 747 and serine 781 each carry the phosphoserine modification. Residues 770-782 are compositionally biased toward basic and acidic residues; that stretch reads LARDQTNESKDSA. The residue at position 829 (tyrosine 829) is a Phosphotyrosine. Threonine 831 carries the post-translational modification Phosphothreonine. Phosphoserine is present on residues serine 893, serine 899, serine 903, serine 947, serine 979, and serine 1031. The tract at residues 1036-1077 is disordered; the sequence is EFGEPTSEQTGAAAGKPAAPTATPVSWKPQDPSEQPQEKRYQ. Over residues 1045-1059 the composition is skewed to low complexity; it reads TGAAAGKPAAPTATP. A phosphoserine mark is found at serine 1099 and serine 1205. Residue threonine 1210 is modified to Phosphothreonine. Serine 1214, serine 1302, and serine 1385 each carry phosphoserine. Residues 1399–1667 form an interaction with NEB region; that stretch reads SNVSLRSVNL…KFLDWTELKR (269 aa). Gelsolin-like repeat units lie at residues 1421–1520, 1540–1662, 1732–1842, 1861–1962, and 1995–2102; these read KKLM…LGGQ, IETN…FLDW, ISVD…FQGG, WRLY…LGRR, and ATEF…FPSW. One can recognise an HP domain in the interval 2131 to 2194; the sequence is KLCKTIYPLA…VNLKKAKGLF (64 aa).

The protein belongs to the villin/gelsolin family. Associates with F-actin. Interacts with NEB. Interacts with MYH9. Interacts with MYLK. Interacts with TASOR. In terms of assembly, interacts with TRIP6 and DYNLT1. Interacts with KIF14; at midbody during cytokinesis.

Its subcellular location is the cell membrane. The protein resides in the cytoplasm. It localises to the cytoskeleton. The protein localises to the cell projection. It is found in the invadopodium. Its subcellular location is the podosome. The protein resides in the midbody. It localises to the cleavage furrow. Its function is as follows. Forms a high-affinity link between the actin cytoskeleton and the membrane. Is among the first costameric proteins to assemble during myogenesis and it contributes to myogenic membrane structure and differentiation. Appears to be involved in myosin II assembly. May modulate myosin II regulation through MLCK during cell spreading, an initial step in cell migration. May play a role in invadopodial function. May be involved in modulation of focal adhesions. Supervillin-mediated down-regulation of focal adhesions involves binding to TRIP6. Plays a role in cytokinesis through KIF14 interaction. The sequence is that of Supervillin from Bos taurus (Bovine).